The following is a 201-amino-acid chain: Protamine-like protein 99C (201 aa).

Positions 93-143 (GGQQSSCQRQSPSARLRESERRSSRSKTLCRSAKNRQRGKPKPQQSKRRLS) are disordered. Polar residues predominate over residues 94–104 (GQQSSCQRQSP). A compositionally biased stretch (basic residues) spans 125-143 (AKNRQRGKPKPQQSKRRLS).

Belongs to the UPF0771 family.

It localises to the nucleus. The protein localises to the chromosome. Regulates chromatin compaction in spermatid nuclei and is essential for male fertility. Functions in parallel with other chromatin-condensing proteins such as ProtA, ProtB and Mst77F. The sequence is that of Protamine-like protein 99C from Drosophila melanogaster (Fruit fly).